Reading from the N-terminus, the 184-residue chain is Vacuolar protein sorting-associated protein 68 (184 aa).

N-acetylmethionine is present on Met-1. Ser-8 is modified (phosphoserine). Residues 26–46 (GVYLSGALYALGFWIFLDAVL) traverse the membrane as a helical segment. Asn-52 carries an N-linked (GlcNAc...) asparagine glycan. The next 3 helical transmembrane spans lie at 56–76 (VHVTFIDWIPFLCSTLGTLIV), 115–135 (LFFGFALLAGGLSGSIVVLII), and 150–170 (MGVNNVLGNVCILLSCVVLWI).

This sequence belongs to the UPF0220 family.

The protein localises to the vacuole membrane. The protein resides in the mitochondrion. Its function is as follows. Involved in vacuolar protein sorting. This chain is Vacuolar protein sorting-associated protein 68 (VPS68), found in Saccharomyces cerevisiae (strain ATCC 204508 / S288c) (Baker's yeast).